Here is a 336-residue protein sequence, read N- to C-terminus: Dihydroorotate dehydrogenase (quinone) (336 aa).

FMN is bound by residues alanine 62 to lysine 66 and threonine 86. Lysine 66 contributes to the substrate binding site. Substrate is bound at residue asparagine 111–phenylalanine 115. Asparagine 139 and asparagine 172 together coordinate FMN. Asparagine 172 lines the substrate pocket. The active-site Nucleophile is the serine 175. Substrate is bound at residue asparagine 177. The FMN site is built by lysine 217 and threonine 245. Asparagine 246 to threonine 247 contacts substrate. Residues glycine 268, glycine 297, and tyrosine 318 to serine 319 contribute to the FMN site.

This sequence belongs to the dihydroorotate dehydrogenase family. Type 2 subfamily. In terms of assembly, monomer. It depends on FMN as a cofactor.

It localises to the cell membrane. The catalysed reaction is (S)-dihydroorotate + a quinone = orotate + a quinol. It participates in pyrimidine metabolism; UMP biosynthesis via de novo pathway; orotate from (S)-dihydroorotate (quinone route): step 1/1. In terms of biological role, catalyzes the conversion of dihydroorotate to orotate with quinone as electron acceptor. This Baumannia cicadellinicola subsp. Homalodisca coagulata protein is Dihydroorotate dehydrogenase (quinone).